We begin with the raw amino-acid sequence, 588 residues long: Pescadillo homolog (588 aa).

Positions 344–437 (PVSTLFSDFV…KLVPANLYLP (94 aa)) constitute a BRCT domain. 2 disordered regions span residues 446 to 533 (SPWG…EAEE) and 559 to 588 (KKEEKVENLKKKKKQISKTKEKLTKLEGKK). The span at 460 to 493 (DAEEEGEDDEDEDSEEGSGAEVEENVDEDEDDEE) shows a compositional bias: acidic residues. Composition is skewed to basic and acidic residues over residues 510–519 (SDIKDTEVKS) and 576–588 (KTKEKLTKLEGKK). Residues 512–588 (IKDTEVKSKN…EKLTKLEGKK (77 aa)) are a coiled coil.

The protein belongs to the pescadillo family. As to quaternary structure, component of the NOP7 complex, composed of ERB1, NOP7 and YTM1. The complex is held together by ERB1, which interacts with NOP7 via its N-terminal domain and with YTM1 via a high-affinity interaction between the seven-bladed beta-propeller domains of the 2 proteins. The NOP7 complex associates with the 66S pre-ribosome.

The protein localises to the nucleus. The protein resides in the nucleolus. It localises to the nucleoplasm. Component of the NOP7 complex, which is required for maturation of the 25S and 5.8S ribosomal RNAs and formation of the 60S ribosome. The sequence is that of Pescadillo homolog from Vanderwaltozyma polyspora (strain ATCC 22028 / DSM 70294 / BCRC 21397 / CBS 2163 / NBRC 10782 / NRRL Y-8283 / UCD 57-17) (Kluyveromyces polysporus).